The chain runs to 1068 residues: MPRRTDLHRILVIGSGPILIGQAAEFDYAGTQACLALKEEGYEVILVNSNPATIMTDRDVADKVYIEPITLEFVSSILRRERPDAIVPTLGGQTGLNMATELAKSGIPDELGIELLGTKLSAIEKAEDRDLFKQLMDELGQPVPASEVVHTVDEAVKVGNTIGYPLIVRPAYTLGGTGGGMCCDEAELVRIVGKGLELSPVTECLIEQSIAGFKEIEYEMMRDGADNTMVVCTMENFDPVGVHTGDSIVFAPTQTLTDVEHEMLRDASIEIVRTLGIEGGCNVQLALDPNSFQYYVIEVNPRVSRSSALASKATGYPIAKIAAKIAVGLTLDEIRNPVTGTTWSMFEPMLDYVVAKIPRWPFDKFAQADRRLGTQMKATGEVMALGRTIEESLLKAVRSLEIGVDHLALREVADLPDDILEERLLHARDDRLFCLTEAIRRGRTVQELHEQTRIDVFFLDKVAHILEIEERLRACPDDSEALWIAKRNGFSDPAIARIWGETPDDVRVRRVDNGIVPVYKMVDTCAGEFESSTPYFYSTYEMENESKKSQRPSVLVLGSGPIRIGQGIEFDYATVHSVKAIQAAGYEAIIMNSNPETVSTDFSISDKLYFEPLTFEDVMNVIDLEQPDGVIVQFGGQTAINLAGPLSAAGVPILGTQVADLDRAEDREGFESLLAELGIPQAPGGTARSSEEAFAVAEELGYPVLVRPSYVIGGRAMAIVTSAEELKRYMRDAVHASPDKPVLVDRYLNGLECEVDAICDGTDVLIPGIMEHIERAGVHSGDSMAVYPPQRMSQQVADRIIEVTTKLARGLKTKGILNIQFVVANDPATGEETVYVIEANPRASRTVPFLSKVTGVSMAEVATRIILGETLADLGLRPGLLPFSKRIHVKSPVFSFSKLDLVDSHLGPEMKSTGEVMGSDDTVEKALYKVFEAANLHVPEYGKILITVTDDAKPEALQLARRFDRIGFQLVGTMGTARFFDEGGLRIDVAEKIGSGEAGSTESVLDLISRNGCDAVINVMGNGQDTIIDGKQIRREAIARGIPLFTSLDTAAAICRVMESRVFSTESI.

Residues 1 to 401 form a carboxyphosphate synthetic domain region; it reads MPRRTDLHRI…SLLKAVRSLE (401 aa). Residues arginine 129, arginine 169, glycine 175, glycine 176, glutamine 208, isoleucine 210, glutamate 215, glycine 241, valine 242, histidine 243, glutamine 284, and glutamate 298 each contribute to the ATP site. Residues 133–327 form the ATP-grasp 1 domain; sequence KQLMDELGQP…IAKIAAKIAV (195 aa). Residues glutamine 284, glutamate 298, and asparagine 300 each contribute to the Mg(2+) site. Residues glutamine 284, glutamate 298, and asparagine 300 each coordinate Mn(2+). The segment at 402 to 546 is oligomerization domain; the sequence is IGVDHLALRE…YSTYEMENES (145 aa). The tract at residues 547-935 is carbamoyl phosphate synthetic domain; that stretch reads KKSQRPSVLV…ALYKVFEAAN (389 aa). Residues 671–867 enclose the ATP-grasp 2 domain; sequence ESLLAELGIP…MAEVATRIIL (197 aa). ATP is bound by residues arginine 707, arginine 746, leucine 748, glutamate 752, glycine 777, valine 778, histidine 779, serine 780, glutamine 820, and glutamate 838. Positions 820, 838, and 840 each coordinate Mg(2+). Glutamine 820, glutamate 838, and asparagine 840 together coordinate Mn(2+). The 133-residue stretch at 936 to 1068 folds into the MGS-like domain; sequence LHVPEYGKIL…ESRVFSTESI (133 aa). The tract at residues 936–1068 is allosteric domain; the sequence is LHVPEYGKIL…ESRVFSTESI (133 aa).

Belongs to the CarB family. Composed of two chains; the small (or glutamine) chain promotes the hydrolysis of glutamine to ammonia, which is used by the large (or ammonia) chain to synthesize carbamoyl phosphate. Tetramer of heterodimers (alpha,beta)4. Mg(2+) serves as cofactor. The cofactor is Mn(2+).

The catalysed reaction is hydrogencarbonate + L-glutamine + 2 ATP + H2O = carbamoyl phosphate + L-glutamate + 2 ADP + phosphate + 2 H(+). It carries out the reaction hydrogencarbonate + NH4(+) + 2 ATP = carbamoyl phosphate + 2 ADP + phosphate + 2 H(+). It participates in amino-acid biosynthesis; L-arginine biosynthesis; carbamoyl phosphate from bicarbonate: step 1/1. The protein operates within pyrimidine metabolism; UMP biosynthesis via de novo pathway; (S)-dihydroorotate from bicarbonate: step 1/3. Functionally, large subunit of the glutamine-dependent carbamoyl phosphate synthetase (CPSase). CPSase catalyzes the formation of carbamoyl phosphate from the ammonia moiety of glutamine, carbonate, and phosphate donated by ATP, constituting the first step of 2 biosynthetic pathways, one leading to arginine and/or urea and the other to pyrimidine nucleotides. The large subunit (synthetase) binds the substrates ammonia (free or transferred from glutamine from the small subunit), hydrogencarbonate and ATP and carries out an ATP-coupled ligase reaction, activating hydrogencarbonate by forming carboxy phosphate which reacts with ammonia to form carbamoyl phosphate. This Cutibacterium acnes (strain DSM 16379 / KPA171202) (Propionibacterium acnes) protein is Carbamoyl phosphate synthase large chain.